The following is a 157-amino-acid chain: Transcription elongation factor GreA (157 aa).

The stretch at 12 to 74 (LKKLEEELEY…TLEAMLKNAK (63 aa)) forms a coiled coil.

Belongs to the GreA/GreB family.

Functionally, necessary for efficient RNA polymerase transcription elongation past template-encoded arresting sites. The arresting sites in DNA have the property of trapping a certain fraction of elongating RNA polymerases that pass through, resulting in locked ternary complexes. Cleavage of the nascent transcript by cleavage factors such as GreA or GreB allows the resumption of elongation from the new 3'terminus. GreA releases sequences of 2 to 3 nucleotides. The polypeptide is Transcription elongation factor GreA (Thermoanaerobacter pseudethanolicus (strain ATCC 33223 / 39E) (Clostridium thermohydrosulfuricum)).